The following is a 209-amino-acid chain: Ribosomal RNA large subunit methyltransferase E (209 aa).

S-adenosyl-L-methionine is bound by residues G63, W65, D83, D99, and D124. K164 serves as the catalytic Proton acceptor.

It belongs to the class I-like SAM-binding methyltransferase superfamily. RNA methyltransferase RlmE family.

Its subcellular location is the cytoplasm. The catalysed reaction is uridine(2552) in 23S rRNA + S-adenosyl-L-methionine = 2'-O-methyluridine(2552) in 23S rRNA + S-adenosyl-L-homocysteine + H(+). Specifically methylates the uridine in position 2552 of 23S rRNA at the 2'-O position of the ribose in the fully assembled 50S ribosomal subunit. This chain is Ribosomal RNA large subunit methyltransferase E, found in Shewanella woodyi (strain ATCC 51908 / MS32).